The primary structure comprises 228 residues: Ribonuclease 3 (228 aa).

The 129-residue stretch at 2 to 130 (LTYLEQKINY…LLAAVYLDGG (129 aa)) folds into the RNase III domain. Residue E43 coordinates Mg(2+). The active site involves D47. 2 residues coordinate Mg(2+): D116 and E119. E119 is a catalytic residue. The DRBM domain occupies 157 to 226 (DYKTRLQEVV…AMEALSKLGI (70 aa)).

Belongs to the ribonuclease III family. Homodimer. Mg(2+) is required as a cofactor.

It is found in the cytoplasm. The enzyme catalyses Endonucleolytic cleavage to 5'-phosphomonoester.. Its function is as follows. Digests double-stranded RNA. Involved in the processing of primary rRNA transcript to yield the immediate precursors to the large and small rRNAs (23S and 16S). Processes some mRNAs, and tRNAs when they are encoded in the rRNA operon. Processes pre-crRNA and tracrRNA of type II CRISPR loci if present in the organism. This chain is Ribonuclease 3, found in Caldanaerobacter subterraneus subsp. tengcongensis (strain DSM 15242 / JCM 11007 / NBRC 100824 / MB4) (Thermoanaerobacter tengcongensis).